A 63-amino-acid chain; its full sequence is Large ribosomal subunit protein bL28A (63 aa).

It belongs to the bacterial ribosomal protein bL28 family.

In Nocardia farcinica (strain IFM 10152), this protein is Large ribosomal subunit protein bL28A.